A 130-amino-acid chain; its full sequence is Small ribosomal subunit protein uS11c (130 aa).

It belongs to the universal ribosomal protein uS11 family. As to quaternary structure, part of the 30S ribosomal subunit.

The protein localises to the plastid. It localises to the chloroplast. The protein is Small ribosomal subunit protein uS11c of Nephroselmis olivacea (Green alga).